Here is a 311-residue protein sequence, read N- to C-terminus: Cytochrome f (311 aa).

The first 27 residues, 1–27 (MRRHLSLVLGSLVIGLALLIAPGASWA), serve as a signal peptide directing secretion. Tyr28, Cys48, Cys51, and His52 together coordinate heme. Residues 277 to 297 (IYGLLAFFAAVAIAQIMLVLK) traverse the membrane as a helical segment.

The protein belongs to the cytochrome f family. In terms of assembly, the 4 large subunits of the cytochrome b6-f complex are cytochrome b6, subunit IV (17 kDa polypeptide, PetD), cytochrome f and the Rieske protein, while the 4 small subunits are PetG, PetL, PetM and PetN. The complex functions as a dimer. Requires heme as cofactor.

It localises to the cellular thylakoid membrane. Its function is as follows. Component of the cytochrome b6-f complex, which mediates electron transfer between photosystem II (PSII) and photosystem I (PSI), cyclic electron flow around PSI, and state transitions. The polypeptide is Cytochrome f (Synechococcus sp. (strain CC9902)).